A 27-amino-acid chain; its full sequence is Cupiennin-3d (27 aa).

A Glutamic acid 1-amide modification is found at E27.

Expressed by the venom gland.

The protein localises to the secreted. In Cupiennius salei (American wandering spider), this protein is Cupiennin-3d.